An 85-amino-acid polypeptide reads, in one-letter code: Beta-defensin 18 (85 aa).

Residues 1-23 (MQSTMKMFGIILMVIFSVSCGPS) form the signal peptide. Intrachain disulfides connect Cys-39-Cys-65, Cys-46-Cys-60, and Cys-50-Cys-66.

Belongs to the beta-defensin family.

The protein localises to the secreted. Has antibacterial activity. The chain is Beta-defensin 18 (Defb18) from Mus musculus (Mouse).